The chain runs to 403 residues: Phosphoglycerate kinase (403 aa).

Residues 21–23, Arg-36, 59–62, Arg-119, and Arg-159 contribute to the substrate site; these read DFN and HLGR. Residues Lys-214, Gly-301, Glu-332, and 359–362 contribute to the ATP site; that span reads GGDS.

The protein belongs to the phosphoglycerate kinase family. In terms of assembly, monomer.

Its subcellular location is the cytoplasm. The enzyme catalyses (2R)-3-phosphoglycerate + ATP = (2R)-3-phospho-glyceroyl phosphate + ADP. It functions in the pathway carbohydrate degradation; glycolysis; pyruvate from D-glyceraldehyde 3-phosphate: step 2/5. The polypeptide is Phosphoglycerate kinase (Lactobacillus acidophilus (strain ATCC 700396 / NCK56 / N2 / NCFM)).